A 600-amino-acid polypeptide reads, in one-letter code: Zinc metalloproteinase-disintegrin-like stejnihagin-B (600 aa).

The first 20 residues, 1–20 (MIEVLLVTICLAVFPYQGSS), serve as a signal peptide directing secretion. Residues 21 to 191 (IILESGNVND…KASQLVVTAE (171 aa)) constitute a propeptide that is removed on maturation. Position 192 is a pyrrolidone carboxylic acid (Gln-192). One can recognise a Peptidase M12B domain in the interval 198 to 389 (RYVKLAIVAD…YNPQCILNAL (192 aa)). N-linked (GlcNAc...) asparagine glycans are attached at residues Asn-261 and Asn-317. Cystine bridges form between Cys-306/Cys-384, Cys-346/Cys-368, and Cys-348/Cys-351. His-331 provides a ligand contact to Zn(2+). Glu-332 is an active-site residue. Zn(2+) is bound by residues His-335 and His-341. Positions 397–483 (PPVCGNELLE…DCPTDSFHRN (87 aa)) constitute a Disintegrin domain. Residues Val-399, Asn-402, Leu-404, Glu-406, Glu-409, and Asp-412 each coordinate Ca(2+). Disulfide bonds link Cys-400–Cys-429, Cys-411–Cys-424, Cys-413–Cys-419, Cys-423–Cys-446, Cys-437–Cys-443, Cys-442–Cys-468, Cys-455–Cys-475, Cys-462–Cys-494, Cys-487–Cys-499, Cys-506–Cys-556, Cys-521–Cys-565, Cys-534–Cys-544, Cys-551–Cys-587, and Cys-581–Cys-593. A glycan (N-linked (GlcNAc...) asparagine) is linked at Asn-425. The D/ECD-tripeptide signature appears at 461 to 463 (ECD). Residue Asn-467 is glycosylated (N-linked (GlcNAc...) asparagine). Asn-513 carries an N-linked (GlcNAc...) asparagine glycan.

This sequence belongs to the venom metalloproteinase (M12B) family. P-III subfamily. P-IIIa sub-subfamily. In terms of assembly, monomer. Zn(2+) is required as a cofactor. Expressed by the venom gland.

The protein resides in the secreted. Functionally, this metalloproteinase-disintegrin-like impairs hemostasis in the envenomed animal. This is Zinc metalloproteinase-disintegrin-like stejnihagin-B from Trimeresurus stejnegeri (Chinese green tree viper).